The chain runs to 128 residues: Transmembrane protein 234 homolog (128 aa).

4 consecutive transmembrane segments (helical) span residues 3–23 (TYNI…NPLI), 53–73 (PSYT…FYTL), 80–100 (LVVP…GMLL), and 104–124 (VLHF…TICV).

The protein belongs to the TMEM234 family.

It localises to the membrane. In Dictyostelium discoideum (Social amoeba), this protein is Transmembrane protein 234 homolog.